The primary structure comprises 77 residues: Conotoxin Vc6.14 (77 aa).

Residues 1–19 form the signal peptide; sequence MEKLTILLLVAAVLMSTQA. Residues 20–37 constitute a propeptide that is removed on maturation; that stretch reads MFQGGGEKRPKDKIKFLS. Cystine bridges form between C51/C65, C58/C69, and C64/C74.

Belongs to the conotoxin O2 superfamily. Expressed by the venom duct.

The protein localises to the secreted. Inhibits voltage-gated ion channels. The protein is Conotoxin Vc6.14 of Conus victoriae (Queen Victoria cone).